Here is a 371-residue protein sequence, read N- to C-terminus: MSL complex subunit 3B (371 aa).

Disordered regions lie at residues 1-47 and 160-230; these read MATL…DERA and EERA…PQAK. Residues 8 to 47 are compositionally biased toward basic and acidic residues; that stretch reads PKDDGEGKDEGGSDRGDGDSKPKGKKEVEPHTRREADERA. The MRG domain maps to 44–367; that stretch reads DERAMRIPIP…CEAHYSSKNP (324 aa). The segment covering 183-193 has biased composition (low complexity); the sequence is SESQAVAGPAA. The segment covering 206–216 has biased composition (basic residues); the sequence is APRRSTRHSTH.

It localises to the nucleus. Functionally, probable non-catalytic component of the MSL histone acetyltransferase complex, a multiprotein complex that mediates the majority of histone H4 acetylation at 'Lys-16' (H4K16ac), an epigenetic mark that prevents chromatin compaction. The sequence is that of MSL complex subunit 3B from Mus musculus (Mouse).